A 123-amino-acid chain; its full sequence is MSKYEEVAVHGYEEFCKAVSDRKGKEIFAYFSGDKDEHGKSWCPDCVKAEPVVRAELPHLPEGTVFIYCQVGDRPYWKDSNNDFKKTLKLTGVPTLLRYGTPQKLVEEECFKADLVRMMFTED.

One can recognise a Thioredoxin domain in the interval 41–123 (SWCPDCVKAE…DLVRMMFTED (83 aa)). Catalysis depends on nucleophile residues Cys43 and Cys46. An intrachain disulfide couples Cys43 to Cys46.

This sequence belongs to the thioredoxin family.

The protein localises to the cytoplasm. Its function is as follows. Disulfide reductase. May participate in various redox reactions through the reversible oxidation of its active center dithiol to a disulfide and catalyze dithiol-disulfide exchange reactions. Has peroxidase activity and may contribute to the elimination of cellular hydrogen peroxide. The protein is Thioredoxin domain-containing protein 17 (txndc17) of Danio rerio (Zebrafish).